Reading from the N-terminus, the 639-residue chain is Chaperone protein HtpG (639 aa).

The tract at residues 1–348 (MAQYEFQTEV…SEDLPLNVSR (348 aa)) is a; substrate-binding. The tract at residues 349-565 (EILQQNRVLA…ENDPTVQMER (217 aa)) is b. The interval 566–639 (LMRATGQTHK…KRVNRLLARG (74 aa)) is c.

Belongs to the heat shock protein 90 family. Homodimer.

It localises to the cytoplasm. In terms of biological role, molecular chaperone. Has ATPase activity. The polypeptide is Chaperone protein HtpG (Treponema pallidum (strain Nichols)).